Consider the following 310-residue polypeptide: Vomeronasal type-1 receptor 101 (310 aa).

Over 1–19 (MNKVNILPSDTNMKITLFS) the chain is Extracellular. Residues 20 to 40 (ELSVGISANSILFFAHLCMFF) form a helical membrane-spanning segment. Over 41–49 (EENRSKPID) the chain is Cytoplasmic. A helical transmembrane segment spans residues 50–70 (LCIAFLSLTQLMLLVTMGLIA). The Extracellular portion of the chain corresponds to 71–93 (ADMFMAQGIWDITTCRSLIYFHR). A disulfide bridge links C85 with C172. A helical membrane pass occupies residues 94–114 (LLRGFNLCAACLLHILWTFTL). Topologically, residues 115 to 134 (SPRSSCLTKFKHKSPHHISG) are cytoplasmic. Residues 135 to 155 (AYLFFCVLYMSFSSHLFVLVI) form a helical membrane-spanning segment. The Extracellular portion of the chain corresponds to 156 to 193 (ATSNLTSDHFMYVTQSCSLLPMSYSRTSTFSLLMVTRE). Residue N159 is glycosylated (N-linked (GlcNAc...) asparagine). Residues 194–214 (VFLISLMALSSGYMVTLLWRH) form a helical membrane-spanning segment. Topologically, residues 215-238 (KKQAQHLHSTRLSSKASPQQRATR) are cytoplasmic. Residues 239–259 (TILLLMTFFVVFYILGTVIFH) traverse the membrane as a helical segment. The Extracellular segment spans residues 260–268 (SRTKFKDGS). A helical transmembrane segment spans residues 269-289 (IFYCVQIIVSHSYATISPFVF). Residues 290–310 (VFSEKRIIKFFRSMCGRIVNT) lie on the Cytoplasmic side of the membrane.

This sequence belongs to the G-protein coupled receptor 1 family. As to expression, expressed in 1-4% of neurons of the vomeronasal organ. Only one pheromone receptor gene may be expressed in a particular neuron. Not expressed in the main olfactory epithelium.

It is found in the cell membrane. Functionally, putative pheromone receptor implicated in the regulation of social as well as reproductive behavior. This is Vomeronasal type-1 receptor 101 (Vom1r101) from Rattus norvegicus (Rat).